Consider the following 354-residue polypeptide: DNA polymerase IV (354 aa).

Residues 14-198 form the UmuC domain; that stretch reads IIHIDMDAFF…MDIAKFHGVG (185 aa). Residues D18 and D116 each contribute to the Mg(2+) site. E117 is an active-site residue.

It belongs to the DNA polymerase type-Y family. In terms of assembly, monomer. The cofactor is Mg(2+).

Its subcellular location is the cytoplasm. It catalyses the reaction DNA(n) + a 2'-deoxyribonucleoside 5'-triphosphate = DNA(n+1) + diphosphate. In terms of biological role, poorly processive, error-prone DNA polymerase involved in untargeted mutagenesis. Copies undamaged DNA at stalled replication forks, which arise in vivo from mismatched or misaligned primer ends. These misaligned primers can be extended by PolIV. Exhibits no 3'-5' exonuclease (proofreading) activity. May be involved in translesional synthesis, in conjunction with the beta clamp from PolIII. The polypeptide is DNA polymerase IV (Streptococcus sanguinis (strain SK36)).